A 156-amino-acid chain; its full sequence is Small ribosomal subunit protein uS7 (156 aa).

The protein belongs to the universal ribosomal protein uS7 family. As to quaternary structure, part of the 30S ribosomal subunit. Contacts proteins S9 and S11.

In terms of biological role, one of the primary rRNA binding proteins, it binds directly to 16S rRNA where it nucleates assembly of the head domain of the 30S subunit. Is located at the subunit interface close to the decoding center, probably blocks exit of the E-site tRNA. The sequence is that of Small ribosomal subunit protein uS7 from Buchnera aphidicola subsp. Acyrthosiphon pisum (strain Tuc7).